We begin with the raw amino-acid sequence, 1330 residues long: DNA-directed RNA polymerase subunit beta'' (1330 aa).

Zn(2+) is bound by residues Cys214, Cys282, Cys289, and Cys292.

The protein belongs to the RNA polymerase beta' chain family. RpoC2 subfamily. In terms of assembly, in plastids the minimal PEP RNA polymerase catalytic core is composed of four subunits: alpha, beta, beta', and beta''. When a (nuclear-encoded) sigma factor is associated with the core the holoenzyme is formed, which can initiate transcription. Requires Zn(2+) as cofactor.

It localises to the plastid. Its subcellular location is the chloroplast. The enzyme catalyses RNA(n) + a ribonucleoside 5'-triphosphate = RNA(n+1) + diphosphate. Functionally, DNA-dependent RNA polymerase catalyzes the transcription of DNA into RNA using the four ribonucleoside triphosphates as substrates. The polypeptide is DNA-directed RNA polymerase subunit beta'' (Physcomitrium patens (Spreading-leaved earth moss)).